A 303-amino-acid polypeptide reads, in one-letter code: Olfactory receptor 10A2 (303 aa).

Over 1-12 (MSFSSLPTEIQS) the chain is Extracellular. The helical transmembrane segment at 13–33 (LLFLTFLTIYLVTLMGNCLII) threads the bilayer. Residues 34–41 (LVTLADPM) are Cytoplasmic-facing. Residues 42 to 62 (LHSPMYFFLRNLSFLEIGFNL) traverse the membrane as a helical segment. Residues 63-86 (VIVPKMLGTLLAQDTTISFLGCAT) are Extracellular-facing. Cysteine 84 and cysteine 176 are joined by a disulfide. A helical transmembrane segment spans residues 87–107 (QMYFFFFFGVAECFLLATMAY). The Cytoplasmic segment spans residues 108-126 (DRYVAICSPLHYPVIMNQR). A helical membrane pass occupies residues 127–147 (TRAKLAAASWFPGFPVATVQT). At 148 to 184 (TWLFSFPFCGTNKVNHFFCDSPPVLRLVCADTALFEI) the chain is on the extracellular side. A helical transmembrane segment spans residues 185–204 (YAIVGTILVVMIPCLLILCS). Residues 205 to 224 (YTHIAAAILKIPSAKGKNKA) lie on the Cytoplasmic side of the membrane. Residues 225–245 (FSTCSSHLLVVSLFYISLSLT) form a helical membrane-spanning segment. Residues 246–258 (YFRPKSNNSPEGK) are Extracellular-facing. The chain crosses the membrane as a helical span at residues 259–279 (KLLSLSYTVMTPMLNPIIYSL). The Cytoplasmic portion of the chain corresponds to 280–301 (RNNEVKNALSRTVSKALALRNC).

It belongs to the G-protein coupled receptor 1 family.

The protein resides in the cell membrane. In terms of biological role, odorant receptor. This Homo sapiens (Human) protein is Olfactory receptor 10A2 (OR10A2).